Consider the following 344-residue polypeptide: Ferredoxin--NADP reductase (344 aa).

FAD is bound by residues Ser-12, Asp-31, Lys-39, Tyr-43, Val-83, Ile-118, Asp-285, and Ser-326.

This sequence belongs to the ferredoxin--NADP reductase type 2 family. As to quaternary structure, homodimer. Requires FAD as cofactor.

The catalysed reaction is 2 reduced [2Fe-2S]-[ferredoxin] + NADP(+) + H(+) = 2 oxidized [2Fe-2S]-[ferredoxin] + NADPH. In Staphylococcus aureus (strain JH1), this protein is Ferredoxin--NADP reductase.